A 259-amino-acid chain; its full sequence is TLC domain-containing protein 4 (259 aa).

The next 6 membrane-spanning stretches (helical) occupy residues 6–26 (FISYCVVTGSFLGFQLLFSII), 53–73 (CVSTTHALVVGSGCLYILAYD), 86–106 (FWVKMNVAITCGYLVHDLLLL), 117–133 (YMVCHHLAVFYSYGYVL), 172–192 (PVLLNGLAMALVFFIVRIAVI), and 213–233 (IGPQVAWIVSCVVLDILNVFW). The region spanning 44-246 (GKQCEWDSRC…IARGFYKVVK (203 aa)) is the TLC domain.

It belongs to the TLCD4 family.

It is found in the membrane. In Xenopus tropicalis (Western clawed frog), this protein is TLC domain-containing protein 4 (tlcd4).